We begin with the raw amino-acid sequence, 468 residues long: 6-phosphogluconate dehydrogenase, decarboxylating (468 aa).

NADP(+) is bound by residues 10–15 (GMAVMG), 33–35 (NRS), 74–76 (VKA), and Asn-102. Residues Asn-102 and 128–130 (SGG) contribute to the substrate site. The Proton acceptor role is filled by Lys-183. Residue 186-187 (HN) participates in substrate binding. The active-site Proton donor is Glu-190. Positions 191, 260, 287, 445, and 451 each coordinate substrate.

The protein belongs to the 6-phosphogluconate dehydrogenase family. Homodimer.

The catalysed reaction is 6-phospho-D-gluconate + NADP(+) = D-ribulose 5-phosphate + CO2 + NADPH. It functions in the pathway carbohydrate degradation; pentose phosphate pathway; D-ribulose 5-phosphate from D-glucose 6-phosphate (oxidative stage): step 3/3. Functionally, catalyzes the oxidative decarboxylation of 6-phosphogluconate to ribulose 5-phosphate and CO(2), with concomitant reduction of NADP to NADPH. In Klebsiella pneumoniae, this protein is 6-phosphogluconate dehydrogenase, decarboxylating (gnd).